We begin with the raw amino-acid sequence, 623 residues long: Glutathione import ATP-binding protein GsiA (623 aa).

2 ABC transporter domains span residues 15-269 (VENL…RALL) and 314-564 (LRVR…RKLL). Residues 49–56 (GESGSGKS) and 357–364 (GESGSGKS) contribute to the ATP site.

This sequence belongs to the ABC transporter superfamily. Glutathione importer (TC 3.A.1.5.11) family. The complex is composed of two ATP-binding proteins (GsiA), two transmembrane proteins (GsiC and GsiD) and a solute-binding protein (GsiB).

It is found in the cell inner membrane. It carries out the reaction glutathione(out) + ATP + H2O = glutathione(in) + ADP + phosphate + H(+). Functionally, part of the ABC transporter complex GsiABCD involved in glutathione import. Responsible for energy coupling to the transport system. The polypeptide is Glutathione import ATP-binding protein GsiA (Escherichia coli O157:H7).